The sequence spans 313 residues: Mitochondrial uncoupling protein 5 (313 aa).

3 Solcar repeats span residues 4–108 (KGFA…IKGE), 117–208 (MPLM…VKET), and 217–307 (DGLG…VKKL). The next 6 helical transmembrane spans lie at 6 to 26 (FAEGGIASIVAGCSTHPLDLI), 77 to 97 (MRALFSGVSATVLRQTLYSTT), 123 to 143 (IGAGAIAGAIGAAVGNPADVA), 182 to 202 (RGSSLTINRAMLVTSSQLASY), 223 to 243 (VSASFAAGFVASVASNPVDVI), and 280 to 300 (YKGFIPTVSRQAPFTVVLFVT).

Belongs to the mitochondrial carrier (TC 2.A.29) family. In terms of tissue distribution, expressed in roots, leaves, stems and flowers.

The protein resides in the mitochondrion inner membrane. Functionally, PUMPS are mitochondrial transporter proteins that create proton leaks across the inner mitochondrial membrane, thus uncoupling oxidative phosphorylation. This leads to a decrease in the efficiency of oxidative phosphorylation and an increase in heat production. May be involved in protecting plant cells against oxidative stress damage. Recombinant PUMP5, reconstituted into liposomes, transports a wide range of dicarboxylic acids including malate, oxaloacetate and succinate as well as phosphate, sulfate and thiosulfate. However, it is unknown if these transports are of any biological significance in vivo. This Arabidopsis thaliana (Mouse-ear cress) protein is Mitochondrial uncoupling protein 5 (PUMP5).